Consider the following 181-residue polypeptide: Isopentenyl-diphosphate Delta-isomerase (181 aa).

The Mn(2+) site is built by His25 and His32. Positions 30–164 constitute a Nudix hydrolase domain; sequence PLHLAFSCWL…PWAFSPWMVM (135 aa). Residue Cys67 is part of the active site. His69 provides a ligand contact to Mn(2+). Residue Glu87 coordinates Mg(2+). Residues Glu114 and Glu116 each contribute to the Mn(2+) site. Residue Glu116 is part of the active site.

This sequence belongs to the IPP isomerase type 1 family. As to quaternary structure, homodimer. Requires Mg(2+) as cofactor. The cofactor is Mn(2+).

It localises to the cytoplasm. The enzyme catalyses isopentenyl diphosphate = dimethylallyl diphosphate. It participates in isoprenoid biosynthesis; dimethylallyl diphosphate biosynthesis; dimethylallyl diphosphate from isopentenyl diphosphate: step 1/1. In terms of biological role, catalyzes the 1,3-allylic rearrangement of the homoallylic substrate isopentenyl (IPP) to its highly electrophilic allylic isomer, dimethylallyl diphosphate (DMAPP). This chain is Isopentenyl-diphosphate Delta-isomerase, found in Salmonella agona (strain SL483).